A 484-amino-acid polypeptide reads, in one-letter code: PTS system MurNAc-GlcNAc-specific EIIBC component (484 aa).

Residues 5–87 (QQLAERIIAA…AELSGVKLGD (83 aa)) enclose the PTS EIIB type-1 domain. Residue Cys-27 is the Phosphocysteine intermediate; for EIIB activity of the active site. Residues 130–484 (KSIANIFIPL…AMRQTDLLGD (355 aa)) form the PTS EIIC type-1 domain. The next 10 helical transmembrane spans lie at 135–155 (IFIPLIPAFIGAGLIGGIAAV), 160–180 (MVAGYISGAWITQLITVFNVI), 200–220 (FGATPGLGGVIGGTTLLTGIA), 234–254 (LQPGQGGIIGVIFAVWILSIV), 274–294 (IALLIVGLLTIFIFMPLAGFV), 305–325 (IISIGGVFSGFIIGASFLPLV), 349–369 (LLPIAAMAGAGQVGAALALWV), 384–404 (ALPVGFLGIGEPLIYGVTLPL), 408–428 (FLTACIGGGIGGAVIGGIGHI), and 450–470 (LGYIAGLLAAYAGGFVCTYLF).

Its subcellular location is the cell membrane. It catalyses the reaction N-acetyl-beta-D-muramate-(1-&gt;4)-N-acetyl-D-glucosamine(out) + N(pros)-phospho-L-histidyl-[protein] = 6-phospho-N-acetyl-beta-D-muramate-(1-&gt;4)-N-acetyl-D-glucosamine(in) + L-histidyl-[protein]. Its pathway is cell wall biogenesis; peptidoglycan recycling. Functionally, the phosphoenolpyruvate-dependent sugar phosphotransferase system (sugar PTS), a major carbohydrate active transport system, catalyzes the phosphorylation of incoming sugar substrates concomitantly with their translocation across the cell membrane. This system is involved in the uptake and phosphorylation of MurNAc-GlcNAc, the principle peptidoglycan turnover product of S.aureus, yielding cytoplasmic MurNAc 6P-GlcNAc. This is PTS system MurNAc-GlcNAc-specific EIIBC component from Staphylococcus aureus (strain Mu50 / ATCC 700699).